The primary structure comprises 198 residues: Recombination protein RecR (198 aa).

A C4-type zinc finger spans residues 57-72; it reads CSVCGHITENDPCYIC. Positions 80–175 constitute a Toprim domain; sequence SVICVVEDDK…KVTRLAQGLS (96 aa).

It belongs to the RecR family.

In terms of biological role, may play a role in DNA repair. It seems to be involved in an RecBC-independent recombinational process of DNA repair. It may act with RecF and RecO. The chain is Recombination protein RecR from Staphylococcus aureus (strain JH1).